A 439-amino-acid chain; its full sequence is Probable N-acetylmuramidase (439 aa).

The signal sequence occupies residues Met-1–Ala-57. Disordered stretches follow at residues Ser-218 to Thr-241 and Ser-287 to Gln-320. One can recognise a LysM 1 domain in the interval Thr-241–Leu-284. The segment covering Ser-287–Ser-319 has biased composition (low complexity). Positions Thr-321–Val-364 constitute a LysM 2 domain. Positions Ser-372–Asn-393 are disordered. A LysM 3 domain is found at Ser-395 to Ile-438.

This sequence belongs to the glycosyl hydrolase 73 family.

It is found in the secreted. The catalysed reaction is Hydrolysis of (1-&gt;4)-beta-linkages between N-acetylmuramic acid and N-acetyl-D-glucosamine residues in a peptidoglycan and between N-acetyl-D-glucosamine residues in chitodextrins.. In terms of biological role, required for cell separation during growth. This chain is Probable N-acetylmuramidase (acmA), found in Lactococcus lactis subsp. lactis (strain IL1403) (Streptococcus lactis).